A 186-amino-acid polypeptide reads, in one-letter code: Ras-related protein rapA (186 aa).

12 to 19 (GSGGVGKS) is a binding site for GTP. Positions 34-42 (YDPTIEDSY) match the Effector region motif. GTP-binding positions include 59–63 (DTAGT) and 118–121 (NKCD). C183 is modified (cysteine methyl ester). A lipid anchor (S-geranylgeranyl cysteine) is attached at C183. A propeptide spans 184–186 (ALL) (removed in mature form).

Belongs to the small GTPase superfamily. Ras family. Interacts with ralGDS (only when rapA is in its GTP-bound state). Interacts with the Rap guanine nucleotide exchange factor glfB.

It localises to the cell membrane. It catalyses the reaction GTP + H2O = GDP + phosphate + H(+). In terms of biological role, g protein of the Ras family that positively regulates phagocytosis and negatively regulates macropinocytosis. May be involved in the activation of guanylyl cyclase during the response to hyperosmotic conditions. Overexpressing cells generate alterations in cell shape and contractile responses. Involved in chemotaxis via regulation of the balance of Ras and Rap signaling at the leading edge of chemotaxing cells. This chain is Ras-related protein rapA (rapA), found in Dictyostelium discoideum (Social amoeba).